Here is a 95-residue protein sequence, read N- to C-terminus: Hge-scorpine (95 aa).

Positions 1–19 are cleaved as a signal peptide; sequence MNTKLTVLCFLGIVTIVSC. Residues 55–94 enclose the BetaSPN-type CS-alpha/beta domain; it reads QFGCFANVDVKGDCKRHCKAEDKEGICHGTKCKCGVPISY. Disulfide bonds link Cys58–Cys81, Cys68–Cys86, and Cys72–Cys88.

Belongs to the long chain scorpion toxin family. Class 3 subfamily. In terms of tissue distribution, expressed by the venom gland.

Its subcellular location is the secreted. Has antibacterial activity against B.subtilis, but not against S.aureus. Also has hemolytic and cytolytic activities. Since cell lysis occurs at the tested concentrations, observation of activity on potassium channels is impossible. Its function is as follows. Blocks Kv1.1/KCNA1 (IC(50)=185 nM) potassium channels. Shows a weak hemolytic activity. In Hoffmannihadrurus gertschi (Scorpion), this protein is Hge-scorpine.